The sequence spans 359 residues: Beta-1,3-galactosyltransferase bre-2 (359 aa).

Residues 1–11 (MRQSRRASSRV) lie on the Cytoplasmic side of the membrane. The helical; Signal-anchor for type II membrane protein transmembrane segment at 12-29 (NRLVVIFIIVASGFLLLY) threads the bilayer. At 30–359 (KNTQQFTQID…NPDLEELKEK (330 aa)) the chain is on the lumenal side. N-linked (GlcNAc...) asparagine glycans are attached at residues Asn73, Asn163, and Asn209.

It belongs to the glycosyltransferase 31 family.

It localises to the golgi apparatus membrane. Its pathway is protein modification; protein glycosylation. Transfers N-acetylgalactosamine onto carbohydrate substrates. Involved in susceptibility to pore-forming crystal toxins in conjunction with bre-1, bre-3, bre-4, and bre-5. Involved in resistance to the nematotoxic C.cinerea galectin Cgl2. This is Beta-1,3-galactosyltransferase bre-2 from Caenorhabditis elegans.